A 241-amino-acid chain; its full sequence is UDP-2,3-diacylglucosamine hydrolase (241 aa).

Mn(2+) contacts are provided by Asp9, His11, Asp42, Asn79, and His114. A substrate-binding site is contributed by 79 to 80 (NR). The substrate site is built by Asp122, Ser160, Asn164, Lys167, and His195. Positions 195 and 197 each coordinate Mn(2+).

This sequence belongs to the LpxH family. The cofactor is Mn(2+).

The protein resides in the cell inner membrane. The catalysed reaction is UDP-2-N,3-O-bis[(3R)-3-hydroxytetradecanoyl]-alpha-D-glucosamine + H2O = 2-N,3-O-bis[(3R)-3-hydroxytetradecanoyl]-alpha-D-glucosaminyl 1-phosphate + UMP + 2 H(+). It functions in the pathway glycolipid biosynthesis; lipid IV(A) biosynthesis; lipid IV(A) from (3R)-3-hydroxytetradecanoyl-[acyl-carrier-protein] and UDP-N-acetyl-alpha-D-glucosamine: step 4/6. Functionally, hydrolyzes the pyrophosphate bond of UDP-2,3-diacylglucosamine to yield 2,3-diacylglucosamine 1-phosphate (lipid X) and UMP by catalyzing the attack of water at the alpha-P atom. Involved in the biosynthesis of lipid A, a phosphorylated glycolipid that anchors the lipopolysaccharide to the outer membrane of the cell. The protein is UDP-2,3-diacylglucosamine hydrolase of Shewanella frigidimarina (strain NCIMB 400).